The primary structure comprises 287 residues: Iron-sulfur cluster carrier protein (287 aa).

Residue G47–S54 participates in ATP binding.

Belongs to the Mrp/NBP35 ATP-binding proteins family. Homodimer.

Binds and transfers iron-sulfur (Fe-S) clusters to target apoproteins. Can hydrolyze ATP. In Pseudomonas fragi, this protein is Iron-sulfur cluster carrier protein.